A 167-amino-acid chain; its full sequence is Leptin (167 aa).

An N-terminal signal peptide occupies residues 1–21 (MRCGPLYRFLWLWPYLSYVEA). C117 and C167 form a disulfide bridge.

The protein belongs to the leptin family.

The protein resides in the secreted. Its function is as follows. Key player in the regulation of energy balance and body weight control. Once released into the circulation, has central and peripheral effects by binding LEPR, found in many tissues, which results in the activation of several major signaling pathways. In the hypothalamus, acts as an appetite-regulating factor that induces a decrease in food intake and an increase in energy consumption by inducing anorexinogenic factors and suppressing orexigenic neuropeptides, also regulates bone mass and secretion of hypothalamo-pituitary-adrenal hormones. In the periphery, increases basal metabolism, influences reproductive function, regulates pancreatic beta-cell function and insulin secretion, is pro-angiogenic for endothelial cell and affects innate and adaptive immunity. In the arcuate nucleus of the hypothalamus, activates by depolarization POMC neurons inducing FOS and SOCS3 expression to release anorexigenic peptides and inhibits by hyperpolarization NPY neurons inducing SOCS3 with a consequent reduction on release of orexigenic peptides. In addition to its known satiety inducing effect, has a modulatory role in nutrient absorption. In the intestine, reduces glucose absorption by enterocytes by activating PKC and leading to a sequential activation of p38, PI3K and ERK signaling pathways which exerts an inhibitory effect on glucose absorption. Acts as a growth factor on certain tissues, through the activation of different signaling pathways increases expression of genes involved in cell cycle regulation such as CCND1, via JAK2-STAT3 pathway, or VEGFA, via MAPK1/3 and PI3K-AKT1 pathways. May also play an apoptotic role via JAK2-STAT3 pathway and up-regulation of BIRC5 expression. Pro-angiogenic, has mitogenic activity on vascular endothelial cells and plays a role in matrix remodeling by regulating the expression of matrix metalloproteinases (MMPs) and tissue inhibitors of metalloproteinases (TIMPs). In innate immunity, modulates the activity and function of neutrophils by increasing chemotaxis and the secretion of oxygen radicals. Increases phagocytosis by macrophages and enhances secretion of pro-inflammatory mediators. Increases cytotoxic ability of NK cells. Plays a pro-inflammatory role, in synergy with IL1B, by inducing NOS2 which promotes the production of IL6, IL8 and Prostaglandin E2, through a signaling pathway that involves JAK2, PI3K, MAP2K1/MEK1 and MAPK14/p38. In adaptive immunity, promotes the switch of memory T-cells towards T helper-1 cell immune responses. Increases CD4(+)CD25(-) T-cell proliferation and reduces autophagy during TCR (T-cell receptor) stimulation, through MTOR signaling pathway activation and BCL2 up-regulation. The chain is Leptin (LEP) from Capra hircus (Goat).